We begin with the raw amino-acid sequence, 327 residues long: 4-hydroxyproline 2-epimerase (327 aa).

Cysteine 85 functions as the Proton acceptor in the catalytic mechanism. Substrate is bound by residues 86 to 87, histidine 205, and aspartate 231; that span reads GH. Cysteine 235 functions as the Proton donor in the catalytic mechanism. 236–237 lines the substrate pocket; it reads GT.

The protein belongs to the proline racemase family.

It carries out the reaction trans-4-hydroxy-L-proline = cis-4-hydroxy-D-proline. In terms of biological role, catalyzes the epimerization of trans-4-hydroxy-L-proline (t4LHyp) to cis-4-hydroxy-D-proline (c4DHyp). Displays no proline racemase activity. The polypeptide is 4-hydroxyproline 2-epimerase (Roseibium alexandrii (strain DSM 17067 / NCIMB 14079 / DFL-11) (Labrenzia alexandrii)).